We begin with the raw amino-acid sequence, 339 residues long: UPF0450 protein C17orf58 (339 aa).

Positions 1 to 17 (MTARAFWLLCLIVGSSP) are cleaved as a signal peptide. The interval 17-191 (PEAPVAERKT…PQRDAEPGAE (175 aa)) is disordered. Over residues 21-36 (VAERKTSPPHSRKPDS) the composition is skewed to basic and acidic residues. A compositionally biased stretch (low complexity) spans 56 to 72 (APQRPRAAEVAPAARAW). Residues 112–125 (ASPRREPASEDAPR) show a composition bias toward basic and acidic residues. The span at 132–163 (LRFPAARPPALATEGSAGHAHPNRPRAAALAP) shows a compositional bias: low complexity. Intrachain disulfides connect cysteine 193/cysteine 267, cysteine 197/cysteine 271, and cysteine 208/cysteine 338. The region spanning 193–338 (CARACRSDLD…QIQGAIHTQC (146 aa)) is the NTR domain.

This sequence belongs to the UPF0450 family.

This Homo sapiens (Human) protein is UPF0450 protein C17orf58 (C17orf58).